An 81-amino-acid polypeptide reads, in one-letter code: Large ribosomal subunit protein bL31B (81 aa).

Belongs to the bacterial ribosomal protein bL31 family. Type B subfamily. Part of the 50S ribosomal subunit.

The protein is Large ribosomal subunit protein bL31B of Lactococcus lactis subsp. cremoris (strain MG1363).